The following is a 419-amino-acid chain: L-rhamnose isomerase (419 aa).

The Mn(2+) site is built by His-262, Asp-294, and Asp-296.

This sequence belongs to the rhamnose isomerase family. In terms of assembly, homotetramer. Mn(2+) serves as cofactor.

The protein localises to the cytoplasm. The catalysed reaction is L-rhamnopyranose = L-rhamnulose. Its pathway is carbohydrate degradation; L-rhamnose degradation; glycerone phosphate from L-rhamnose: step 1/3. Its function is as follows. Catalyzes the interconversion of L-rhamnose and L-rhamnulose. This Escherichia coli O127:H6 (strain E2348/69 / EPEC) protein is L-rhamnose isomerase.